Reading from the N-terminus, the 362-residue chain is Porin Omp2b (362 aa).

The signal sequence occupies residues 1–22 (MNIKSLLLGSAAALVAASGAQA).

Belongs to the alphaproteobacteria porin family. In terms of assembly, homotrimer.

It localises to the cell outer membrane. In terms of biological role, forms passive diffusion pores that allow small molecular weight hydrophilic materials across the outer membrane. The polypeptide is Porin Omp2b (omp2b) (Brucella suis biovar 1 (strain 1330)).